Reading from the N-terminus, the 99-residue chain is UPF0213 protein RBAM_000440 (99 aa).

The 76-residue stretch at 4–79 folds into the GIY-YIG domain; it reads NSHFFYVLLC…KQLTRKKKEQ (76 aa).

This sequence belongs to the UPF0213 family.

The polypeptide is UPF0213 protein RBAM_000440 (Bacillus velezensis (strain DSM 23117 / BGSC 10A6 / LMG 26770 / FZB42) (Bacillus amyloliquefaciens subsp. plantarum)).